The chain runs to 166 residues: Small ribosomal subunit protein uS5 (166 aa).

Residues 11 to 74 (LQEKLIAVNR…EKARRNMINV (64 aa)) form the S5 DRBM domain.

This sequence belongs to the universal ribosomal protein uS5 family. In terms of assembly, part of the 30S ribosomal subunit. Contacts proteins S4 and S8.

In terms of biological role, with S4 and S12 plays an important role in translational accuracy. Located at the back of the 30S subunit body where it stabilizes the conformation of the head with respect to the body. The protein is Small ribosomal subunit protein uS5 of Enterobacter sp. (strain 638).